The primary structure comprises 345 residues: Phosphoribosylformylglycinamidine cyclo-ligase (345 aa).

It belongs to the AIR synthase family. As to quaternary structure, homodimer.

The protein localises to the cytoplasm. It catalyses the reaction 2-formamido-N(1)-(5-O-phospho-beta-D-ribosyl)acetamidine + ATP = 5-amino-1-(5-phospho-beta-D-ribosyl)imidazole + ADP + phosphate + H(+). The protein operates within purine metabolism; IMP biosynthesis via de novo pathway; 5-amino-1-(5-phospho-D-ribosyl)imidazole from N(2)-formyl-N(1)-(5-phospho-D-ribosyl)glycinamide: step 2/2. The polypeptide is Phosphoribosylformylglycinamidine cyclo-ligase (Escherichia coli O157:H7).